Consider the following 156-residue polypeptide: Small ribosomal subunit protein uS7 (156 aa).

It belongs to the universal ribosomal protein uS7 family. Part of the 30S ribosomal subunit. Contacts proteins S9 and S11.

Its function is as follows. One of the primary rRNA binding proteins, it binds directly to 16S rRNA where it nucleates assembly of the head domain of the 30S subunit. Is located at the subunit interface close to the decoding center, probably blocks exit of the E-site tRNA. This chain is Small ribosomal subunit protein uS7, found in Alcanivorax borkumensis (strain ATCC 700651 / DSM 11573 / NCIMB 13689 / SK2).